A 70-amino-acid polypeptide reads, in one-letter code: Cold shock-like protein CspB (70 aa).

In terms of domain architecture, CSD spans 7-67 (GLVKWFDAGK…GQKGPSAVNV (61 aa)).

It localises to the cytoplasm. The polypeptide is Cold shock-like protein CspB (cspB) (Yersinia enterocolitica).